Here is a 421-residue protein sequence, read N- to C-terminus: UDP-N-acetylglucosamine 1-carboxyvinyltransferase 2 (421 aa).

A phosphoenolpyruvate-binding site is contributed by 22–23 (KN). Arg-94 contacts UDP-N-acetyl-alpha-D-glucosamine. The active-site Proton donor is the Cys-118. Cys-118 bears the 2-(S-cysteinyl)pyruvic acid O-phosphothioketal mark. 2 residues coordinate UDP-N-acetyl-alpha-D-glucosamine: Asp-308 and Ile-330.

This sequence belongs to the EPSP synthase family. MurA subfamily.

It is found in the cytoplasm. It carries out the reaction phosphoenolpyruvate + UDP-N-acetyl-alpha-D-glucosamine = UDP-N-acetyl-3-O-(1-carboxyvinyl)-alpha-D-glucosamine + phosphate. Its pathway is cell wall biogenesis; peptidoglycan biosynthesis. Cell wall formation. Adds enolpyruvyl to UDP-N-acetylglucosamine. The polypeptide is UDP-N-acetylglucosamine 1-carboxyvinyltransferase 2 (Lactococcus lactis subsp. lactis (strain IL1403) (Streptococcus lactis)).